The primary structure comprises 2060 residues: Unconventional myosin-X (2060 aa).

The residue at position 1 (M1) is an N-acetylmethionine. The 677-residue stretch at E63–E739 folds into the Myosin motor domain. ATP contacts are provided by residues N104, Y113, G160–E165, and N215. Residues L619–T641 are actin-binding. IQ domains are found at residues I742 to T771, V765 to V794, and L788 to E817. Residues E814 to E882 are SAH. A coiled-coil region spans residues N883–A933. S961, S964, and S967 each carry phosphoserine. 2 disordered regions span residues S971–N1039 and S1064–D1088. Over residues P991 to A1005 the composition is skewed to acidic residues. The segment covering S1064–D1083 has biased composition (polar residues). The residue at position 1160 (T1160) is a Phosphothreonine. PH domains lie at E1214 to S1312 and E1394 to D1499. The MyTH4 domain occupies L1549–I1697. In terms of domain architecture, FERM spans M1702–R2046.

It belongs to the TRAFAC class myosin-kinesin ATPase superfamily. Myosin family. In terms of assembly, monomer, when in an inactive conformation in the cytosol. Homodimer in its active, membrane-bound conformation; antiparallel coiled coil-mediated dimer formation. Interacts with ECPAS. Interacts with DCC and ITGB5; the presence of DCC inhibits ITGB5 binding. Interacts with tubulin; ITGB5 or DCC binding inhibits tubulin binding. Interacts strongly with CALM3 and weakly with CALM, the CALM3 interaction is essential for function in filopodial extension and motility. Interacts with ITGB1, ITGB3 and ITGB5. Interacts with NEO1. Interacts with VASP.

The protein localises to the cytoplasm. The protein resides in the cytosol. It is found in the cell projection. Its subcellular location is the lamellipodium. It localises to the ruffle. The protein localises to the cytoskeleton. The protein resides in the filopodium tip. It is found in the cell cortex. Its subcellular location is the filopodium membrane. It localises to the cell membrane. Functionally, myosins are actin-based motor molecules with ATPase activity. Unconventional myosins serve in intracellular movements. MYO10 binds to actin filaments and actin bundles and functions as a plus end-directed motor. Moves with higher velocity and takes larger steps on actin bundles than on single actin filaments. The tail domain binds to membranous compartments containing phosphatidylinositol 3,4,5-trisphosphate or integrins, and mediates cargo transport along actin filaments. Regulates cell shape, cell spreading and cell adhesion. Stimulates the formation and elongation of filopodia. In hippocampal neurons it induces the formation of dendritic filopodia by trafficking the actin-remodeling protein VASP to the tips of filopodia, where it promotes actin elongation. Plays a role in formation of the podosome belt in osteoclasts. This Rattus norvegicus (Rat) protein is Unconventional myosin-X (Myo10).